The sequence spans 214 residues: ATP phosphoribosyltransferase (214 aa).

The protein belongs to the ATP phosphoribosyltransferase family. Short subfamily. In terms of assembly, heteromultimer composed of HisG and HisZ subunits.

The protein localises to the cytoplasm. It catalyses the reaction 1-(5-phospho-beta-D-ribosyl)-ATP + diphosphate = 5-phospho-alpha-D-ribose 1-diphosphate + ATP. It functions in the pathway amino-acid biosynthesis; L-histidine biosynthesis; L-histidine from 5-phospho-alpha-D-ribose 1-diphosphate: step 1/9. Catalyzes the condensation of ATP and 5-phosphoribose 1-diphosphate to form N'-(5'-phosphoribosyl)-ATP (PR-ATP). Has a crucial role in the pathway because the rate of histidine biosynthesis seems to be controlled primarily by regulation of HisG enzymatic activity. The sequence is that of ATP phosphoribosyltransferase from Streptococcus sanguinis (strain SK36).